The chain runs to 472 residues: 3beta,22alpha-dihydroxysteroid 3-dehydrogenase (472 aa).

Residues 1–21 (MAFTAFLLLLSSIAAGFLLLL) form a helical membrane-spanning segment. Cys-418 contacts heme.

Belongs to the cytochrome P450 family. Heme serves as cofactor.

It localises to the membrane. The enzyme catalyses (22S)-22-hydroxycampesterol + reduced [NADPH--hemoprotein reductase] + O2 = (22S)-22-hydroxycampest-4-en-3-one + oxidized [NADPH--hemoprotein reductase] + 2 H2O + H(+). It catalyses the reaction 6-deoxoteasterone + reduced [NADPH--hemoprotein reductase] + O2 = 3-dehydro-6-deoxoteasterone + oxidized [NADPH--hemoprotein reductase] + 2 H2O + H(+). It carries out the reaction 6-deoxycathasterone + reduced [NADPH--hemoprotein reductase] + O2 = (22S,24R)-22-hydroxy-5alpha-ergostan-3-one + oxidized [NADPH--hemoprotein reductase] + 2 H2O + H(+). The catalysed reaction is (22R,23R)-22,23-dihydroxycampesterol + reduced [NADPH--hemoprotein reductase] + O2 = (22R,23R)-22,23-dihydroxycampest-4-en-3-one + oxidized [NADPH--hemoprotein reductase] + 2 H2O + H(+). It participates in plant hormone biosynthesis; brassinosteroid biosynthesis. Its function is as follows. Catalyzes C3-oxidation steps in brassinosteroids biosynthesis. Converts (22S)-22-hydroxycampesterol (22-OHCR) to (22S,24R)-22-hydroxyergost-4-en-3-one (22-hydroxy-campesta-4-en-3-one, 22-OH-4-en-3-one), 6-deoxocathasterone (6-deoxoCT) to (22S,24R)-22-hydroxy-5alpha-ergostan-3-one (22-hydroxy-campesta-3-one, 22-OH-3-one), (22R,23R)-22,23-dihydroxycampesterol (22,23-diOHCR) to (22R,23R)-22,23-dihydroxy-campest-4-en-3-one (22,23-diOH-4-en-3-one), and 6-deoxoteasterone (6-deoxoTE) to 3-dehydro-6-deoxoteasterone (6-deoxo3DT, 6-deoxo-3-DHT). The chain is 3beta,22alpha-dihydroxysteroid 3-dehydrogenase from Arabidopsis thaliana (Mouse-ear cress).